The chain runs to 677 residues: Methionine--tRNA ligase (677 aa).

A 'HIGH' region motif is present at residues proline 15–histidine 25. Residues cysteine 146, cysteine 149, cysteine 159, and cysteine 162 each contribute to the Zn(2+) site. The short motif at lysine 333–serine 337 is the 'KMSKS' region element. ATP is bound at residue lysine 336. The region spanning aspartate 575–lysine 677 is the tRNA-binding domain.

It belongs to the class-I aminoacyl-tRNA synthetase family. MetG type 1 subfamily. In terms of assembly, homodimer. It depends on Zn(2+) as a cofactor.

Its subcellular location is the cytoplasm. The enzyme catalyses tRNA(Met) + L-methionine + ATP = L-methionyl-tRNA(Met) + AMP + diphosphate. In terms of biological role, is required not only for elongation of protein synthesis but also for the initiation of all mRNA translation through initiator tRNA(fMet) aminoacylation. This is Methionine--tRNA ligase from Shigella boydii serotype 18 (strain CDC 3083-94 / BS512).